The chain runs to 168 residues: 6,7-dimethyl-8-ribityllumazine synthase (168 aa).

Residues Trp31, 65–67 (SFE), and 90–92 (NVI) contribute to the 5-amino-6-(D-ribitylamino)uracil site. 95 to 96 (ET) contributes to the (2S)-2-hydroxy-3-oxobutyl phosphate binding site. The active-site Proton donor is His98. A 5-amino-6-(D-ribitylamino)uracil-binding site is contributed by Phe123. Residue Arg137 participates in (2S)-2-hydroxy-3-oxobutyl phosphate binding.

The protein belongs to the DMRL synthase family.

It catalyses the reaction (2S)-2-hydroxy-3-oxobutyl phosphate + 5-amino-6-(D-ribitylamino)uracil = 6,7-dimethyl-8-(1-D-ribityl)lumazine + phosphate + 2 H2O + H(+). It functions in the pathway cofactor biosynthesis; riboflavin biosynthesis; riboflavin from 2-hydroxy-3-oxobutyl phosphate and 5-amino-6-(D-ribitylamino)uracil: step 1/2. Functionally, catalyzes the formation of 6,7-dimethyl-8-ribityllumazine by condensation of 5-amino-6-(D-ribitylamino)uracil with 3,4-dihydroxy-2-butanone 4-phosphate. This is the penultimate step in the biosynthesis of riboflavin. The sequence is that of 6,7-dimethyl-8-ribityllumazine synthase from Christiangramia forsetii (strain DSM 17595 / CGMCC 1.15422 / KT0803) (Gramella forsetii).